The sequence spans 653 residues: Protein CBFA2T3 (653 aa).

Residues 1–10 (MPASRLRDRA) are compositionally biased toward basic and acidic residues. Positions 1-109 (MPASRLRDRA…HTHREDGPAT (109 aa)) are disordered. The segment at 1 to 127 (MPASRLRDRA…CLKWSMVCLL (127 aa)) is required for nucleolar targeting (in isoform 1). Residues 1–430 (MPASRLRDRA…RRCQEADREE (430 aa)) are mediates interaction with PDE7A (in isoform 2). Positions 1–435 (MPASRLRDRA…ADREELNHWA (435 aa)) are mediates localization to the nucleus. The segment covering 11-23 (ASSASGSTCGSMS) has biased composition (low complexity). A compositionally biased stretch (pro residues) spans 75–86 (STPPSMPPPPPA). The interval 145–242 (PNGFSNGPAT…IPFLKANLPL (98 aa)) is interaction with ZBTB33. The 96-residue stretch at 171–266 (ARQLSKLKRF…TPAQYLAQHE (96 aa)) folds into the TAFH domain. The tract at residues 176–268 (KLKRFLTTLQ…AQYLAQHEQL (93 aa)) is interaction with HIF1A. A disordered region spans residues 284-342 (LLEVNENGKRRTPDRTKENGSDRDPLHPEHLSKRPCTLNPAQRYSPSNGPPQPTPPPHY). The span at 289-315 (ENGKRRTPDRTKENGSDRDPLHPEHLS) shows a compositional bias: basic and acidic residues. The segment covering 331 to 341 (NGPPQPTPPPH) has biased composition (pro residues). Positions 394-412 (EEWKHLNNLLNCIMDMVEK) are nervy homology region 2 (NHR2); essential for down-regulation of PFKFB3, PFKFB4 and PDK1 expression. A compositionally biased stretch (basic and acidic residues) spans 434–446 (WARRYSDAEDTKK). A disordered region spans residues 434–472 (WARRYSDAEDTKKGPAPAAARPRSSSAGPEGPQLDVPRE). The span at 447 to 462 (GPAPAAARPRSSSAGP) shows a compositional bias: low complexity. Phosphoserine is present on residues serine 457 and serine 459. Threonine 479 carries the post-translational modification Phosphothreonine. A mediates interaction with PRKAR2A region spans residues 485–506 (DIWRKAEEAVNEVKRQAMSELQ). The interval 485 to 533 (DIWRKAEEAVNEVKRQAMSELQKAVSDAERKAHELITTERAKMERALAE) is nervy homology region 3 (NHR3); essential for down-regulation of PFKFB3, PFKFB4 and PDK1 expression. Residues 488-543 (RKAEEAVNEVKRQAMSELQKAVSDAERKAHELITTERAKMERALAEAKRQASEDAL) are a coiled coil. Residues cysteine 556, cysteine 559, cysteine 567, cysteine 570, cysteine 576, cysteine 580, histidine 588, and cysteine 592 each coordinate Zn(2+). The MYND-type zinc-finger motif lies at 556-592 (CWNCGRKASETCSGCNAARYCGSFCQHRDWEKHHHVC). Residues 603-653 (VADPVPGPPEAAHSLGPSLPVGAASPSEAGSAGPSRPGSPSPPGPLDTVPR) form a disordered region. The span at 622–638 (PVGAASPSEAGSAGPSR) shows a compositional bias: low complexity. 2 positions are modified to phosphoserine: serine 637 and serine 641. Residue threonine 650 is modified to Phosphothreonine.

Belongs to the CBFA2T family. In terms of assembly, homooligomer. Homotetramerization is mediated by nervy homology region 2 (NRH2). Can interact with RUNX1T1 and CBFA2T2; heterotetramerization between members of the CBFA2T family is proposed. Component of a TAL-1 complex composed at least of CBFA2T3, LDB1, TAL1 and TCF3. Interacts with ERBB4, HDAC1, HDAC2, HDAC3, HDAC6, HDAC8, NCOR1, NCOR2, and ZNF652. According to PubMed:12242670, may not interact with HDAC6. Interacts with PLXNA1, PLXNA3 and PRKAR1A. Isoform 2 interacts with PRKAR2A, PDE7A and probably PDE4A. Interacts with ZBTB4, ZBTB38 and ZBTB33. Interacts with HIF1A and EGLN1. Interacts with the AML1-MTG8/ETO fusion protein. As to expression, widely expressed with higher expression in heart, pancreas, skeletal muscle, spleen, thymus and peripheral blood leukocytes. Expressed in hematopoietic cells (at protein level).

It is found in the nucleus. Its subcellular location is the nucleolus. The protein resides in the nucleoplasm. The protein localises to the golgi apparatus membrane. Its function is as follows. Transcriptional corepressor which facilitates transcriptional repression via its association with DNA-binding transcription factors and recruitment of other corepressors and histone-modifying enzymes. Can repress the expression of MMP7 in a ZBTB33-dependent manner. Reduces the protein levels and stability of the transcriptinal regulator HIF1A; interacts with EGLN1 and promotes the HIF1A prolyl hydroxylation-dependent ubiquitination and proteasomal degradation pathway. Contributes to inhibition of glycolysis and stimulation of mitochondrial respiration by down-regulating the expression of glycolytic genes including PFKFB3, PFKFB4, PDK1, PFKP, LDHA and HK1 which are direct targets of HIF1A. Regulates the proliferation and the differentiation of erythroid progenitors by repressing the expression of TAL1 target genes. Plays a role in granulocyte differentiation. Functionally, isoform 2 functions as an A-kinase-anchoring protein. This is Protein CBFA2T3 (CBFA2T3) from Homo sapiens (Human).